Here is a 579-residue protein sequence, read N- to C-terminus: Nuclear receptor coactivator 5 (579 aa).

Met1 carries the post-translational modification N-acetylmethionine. Positions 1–77 (MNTAPSRPSP…DIRDHRDSRS (77 aa)) are disordered. The tract at residues 1–158 (MNTAPSRPSP…RDSFDGRGPP (158 aa)) is transcription repression. Thr3 carries the phosphothreonine modification. Residues Ser9, Ser21, Ser29, Ser34, Ser96, Ser116, Ser126, Ser143, and Ser151 each carry the phosphoserine modification. Over residues 11 to 77 (TRRDPYSFGD…DIRDHRDSRS (67 aa)) the composition is skewed to basic and acidic residues. The interval 148 to 172 (YRDSFDGRGPPGPESQSRAKERLKR) is disordered. Position 274 is a phosphothreonine (Thr274). The LXXLL motif signature appears at 345–349 (LINLL). 2 positions are modified to phosphoserine: Ser378 and Ser381. Disordered regions lie at residues 378-428 (SADS…PTSQ) and 446-529 (ANSS…RPVS). Composition is skewed to low complexity over residues 395-420 (SGSS…ATPT) and 446-460 (ANSS…TGSS). The tract at residues 458-579 (GSSQNQNFST…APMGSYQRHY (122 aa)) is transcription activation. Residues 461-485 (QNQNFSTAANSQPQQRPQASGNQPP) are compositionally biased toward polar residues.

In terms of assembly, binds HTATIP2/TIP30. Interacts with YLPM1. Forms a complex with ILF2, ILF3, YLPM1, KHDRBS1, RBMX and PPP1CA.

Its subcellular location is the nucleus. Nuclear receptor coregulator that can have both coactivator and corepressor functions. Interacts with nuclear receptors for steroids (ESR1 and ESR2) independently of the steroid binding domain (AF-2) of the ESR receptors, and with the orphan nuclear receptor NR1D2. Involved in the coactivation of nuclear steroid receptors (ER) as well as the corepression of MYC in response to 17-beta-estradiol (E2). This chain is Nuclear receptor coactivator 5 (Ncoa5), found in Mus musculus (Mouse).